A 365-amino-acid chain; its full sequence is Glycolaldehyde reductase (365 aa).

NAD(+) is bound by residues aspartate 37, glycine 94, lysine 95, threonine 116, serine 119, serine 125, leucine 127, and tyrosine 131. Aspartate 171, histidine 254, and histidine 271 together coordinate Zn(2+).

It belongs to the iron-containing alcohol dehydrogenase family. The cofactor is Zn(2+).

The enzyme catalyses ethylene glycol + NAD(+) = glycolaldehyde + NADH + H(+). With respect to regulation, is subject to substrate inhibition. Its function is as follows. Oxidoreductase involved in the non-carboxylating pentose bisphosphate pathway, a nucleoside degradation pathway present in some halophilic archaea. Catalyzes the reduction of glycolaldehyde to ethylene glycol. Cannot catalyze the oxidation of glycerol 1-phosphate nor the reduction of dihydroxyacetone phosphate (DHAP). This chain is Glycolaldehyde reductase, found in Halobacterium salinarum (strain ATCC 700922 / JCM 11081 / NRC-1) (Halobacterium halobium).